Reading from the N-terminus, the 292-residue chain is ATP synthase subunit a (292 aa).

The next 6 helical transmembrane spans lie at 37 to 57, 96 to 116, 144 to 164, 192 to 212, 230 to 250, and 263 to 283; these read IDSV…FWLC, FIAP…AMDM, VVPT…LVLC, PVFA…EYVA, LVFM…SGVL, and AIFH…LALI.

The protein belongs to the ATPase A chain family. F-type ATPases have 2 components, CF(1) - the catalytic core - and CF(0) - the membrane proton channel. CF(1) has five subunits: alpha(3), beta(3), gamma(1), delta(1), epsilon(1). CF(0) has three main subunits: a(1), b(2) and c(9-12). The alpha and beta chains form an alternating ring which encloses part of the gamma chain. CF(1) is attached to CF(0) by a central stalk formed by the gamma and epsilon chains, while a peripheral stalk is formed by the delta and b chains.

The protein localises to the cell inner membrane. Its function is as follows. Key component of the proton channel; it plays a direct role in the translocation of protons across the membrane. This chain is ATP synthase subunit a, found in Paracidovorax citrulli (strain AAC00-1) (Acidovorax citrulli).